The sequence spans 358 residues: Cytoplasmic tRNA 2-thiolation protein 1 (358 aa).

This sequence belongs to the TtcA family. CTU1/NCS6/ATPBD3 subfamily.

The protein localises to the cytoplasm. It functions in the pathway tRNA modification; 5-methoxycarbonylmethyl-2-thiouridine-tRNA biosynthesis. Functionally, plays a central role in 2-thiolation of mcm(5)S(2)U at tRNA wobble positions of tRNA(Lys), tRNA(Glu) and tRNA(Gln). Directly binds tRNAs and probably acts by catalyzing adenylation of tRNAs, an intermediate required for 2-thiolation. It is unclear whether it acts as a sulfurtransferase that transfers sulfur from thiocarboxylated URM1 onto the uridine of tRNAs at wobble position. Prior mcm(5) tRNA modification by the elongator complex is required for 2-thiolation. May also be involved in protein urmylation. The chain is Cytoplasmic tRNA 2-thiolation protein 1 from Candida glabrata (strain ATCC 2001 / BCRC 20586 / JCM 3761 / NBRC 0622 / NRRL Y-65 / CBS 138) (Yeast).